Reading from the N-terminus, the 341-residue chain is Homeobox protein knotted-1-like 8 (341 aa).

Positions 1-17 are enriched in low complexity; sequence MESFASLAGGGSSSTTA. Disordered regions lie at residues 1–72, 121–148, and 187–207; these read MESF…AVQG, AAQQ…DQLD, and AESN…SDKQ. Over residues 187 to 196 the composition is skewed to polar residues; sequence AESNCEGTGS. In terms of domain architecture, ELK spans 207-227; it reads QLKHQLLRKYGGSLGDLRQVF. Positions 228-291 form a DNA-binding region, homeobox; TALE-type; it reads SKRTKKGKLP…NQRKRHWKPT (64 aa).

This sequence belongs to the TALE/KNOX homeobox family.

It localises to the nucleus. Functionally, probable transcription factor that may be involved in shoot formation during embryogenesis. The protein is Homeobox protein knotted-1-like 8 (OSH43) of Oryza sativa subsp. japonica (Rice).